The following is a 206-amino-acid chain: MRYTVALTGGIGSGKSTVADAFADLGITVIDADIIARQMVEPGQPALNAIAEHFGSELIAADGTLRRRALRERIFSHPEEKAWLNALLHPLIQQETQRQFQQATSPYVLWVVPLLVENRLYQKANRVLVVDVTPETQLIRTMQRDDVTREHVEHILAAQATREARLAVADDVIDNNGAPDAIASDVARLHASYLKLASQFVSQEKP.

A DPCK domain is found at 4–200 (TVALTGGIGS…ASYLKLASQF (197 aa)). ATP is bound at residue 12 to 17 (GSGKST).

It belongs to the CoaE family.

It localises to the cytoplasm. The catalysed reaction is 3'-dephospho-CoA + ATP = ADP + CoA + H(+). It functions in the pathway cofactor biosynthesis; coenzyme A biosynthesis; CoA from (R)-pantothenate: step 5/5. In terms of biological role, catalyzes the phosphorylation of the 3'-hydroxyl group of dephosphocoenzyme A to form coenzyme A. In Salmonella typhimurium (strain LT2 / SGSC1412 / ATCC 700720), this protein is Dephospho-CoA kinase.